The sequence spans 362 residues: Biotin synthase (362 aa).

One can recognise a Radical SAM core domain in the interval 46–273 (NEVQVSTLLS…ASHVRLSAGR (228 aa)). Positions 61, 65, and 68 each coordinate [4Fe-4S] cluster. Positions 105, 136, 196, and 268 each coordinate [2Fe-2S] cluster. The disordered stretch occupies residues 320 to 339 (PAQRAQKPDQVQEEELLAEV).

The protein belongs to the radical SAM superfamily. Biotin synthase family. As to quaternary structure, homodimer. It depends on [4Fe-4S] cluster as a cofactor. [2Fe-2S] cluster serves as cofactor.

The catalysed reaction is (4R,5S)-dethiobiotin + (sulfur carrier)-SH + 2 reduced [2Fe-2S]-[ferredoxin] + 2 S-adenosyl-L-methionine = (sulfur carrier)-H + biotin + 2 5'-deoxyadenosine + 2 L-methionine + 2 oxidized [2Fe-2S]-[ferredoxin]. The protein operates within cofactor biosynthesis; biotin biosynthesis; biotin from 7,8-diaminononanoate: step 2/2. Functionally, catalyzes the conversion of dethiobiotin (DTB) to biotin by the insertion of a sulfur atom into dethiobiotin via a radical-based mechanism. This is Biotin synthase from Aeromonas hydrophila subsp. hydrophila (strain ATCC 7966 / DSM 30187 / BCRC 13018 / CCUG 14551 / JCM 1027 / KCTC 2358 / NCIMB 9240 / NCTC 8049).